Consider the following 86-residue polypeptide: uncharacterized protein (86 aa).

The next 3 helical transmembrane spans lie at 4–24 (ILII…IAAV), 34–54 (MGLV…ILIN), and 64–84 (DIAY…ARVL).

It to M.jannaschii MJ1223.

It is found in the cell membrane. This is an uncharacterized protein from Methanothermobacter thermautotrophicus (strain ATCC 29096 / DSM 1053 / JCM 10044 / NBRC 100330 / Delta H) (Methanobacterium thermoautotrophicum).